Here is a 248-residue protein sequence, read N- to C-terminus: MNDNRHRSKPPASLAPRDLAALIDISAVQAFHTEADVRELAEIAVAEGFIAAHALPNFVPLLRSLVPPGGPTLVGGPVGFPSGGHTTRMKIAEASELAEGGAQELDMMINVGRLKSGDIGYVRSEIRAVVEAIAPVPLKVILELAHLTDEEIRTASAIVAESGAAFVKTGTGWTPSATTLERLKLIAVTVEGAVEIKAAGGIRSLDAIAEMLRLGVTRFGINTQVAVDLVRQCAALPGSRLDIAGKAD.

The Proton donor/acceptor role is filled by D106. The Schiff-base intermediate with acetaldehyde role is filled by K168. The active-site Proton donor/acceptor is K197.

It belongs to the DeoC/FbaB aldolase family. DeoC type 1 subfamily.

The protein localises to the cytoplasm. It catalyses the reaction 2-deoxy-D-ribose 5-phosphate = D-glyceraldehyde 3-phosphate + acetaldehyde. The protein operates within carbohydrate degradation; 2-deoxy-D-ribose 1-phosphate degradation; D-glyceraldehyde 3-phosphate and acetaldehyde from 2-deoxy-alpha-D-ribose 1-phosphate: step 2/2. Its function is as follows. Catalyzes a reversible aldol reaction between acetaldehyde and D-glyceraldehyde 3-phosphate to generate 2-deoxy-D-ribose 5-phosphate. This chain is Deoxyribose-phosphate aldolase, found in Sinorhizobium medicae (strain WSM419) (Ensifer medicae).